The primary structure comprises 301 residues: Ribonuclease HIII (301 aa).

Residues 90-301 (TPHIGIDESG…LDAILGKVGK (212 aa)) form the RNase H type-2 domain. Residues Asp96, Glu97, and Asp198 each contribute to the a divalent metal cation site.

It belongs to the RNase HII family. RnhC subfamily. Mn(2+) is required as a cofactor. Mg(2+) serves as cofactor.

Its subcellular location is the cytoplasm. The enzyme catalyses Endonucleolytic cleavage to 5'-phosphomonoester.. Functionally, endonuclease that specifically degrades the RNA of RNA-DNA hybrids. The polypeptide is Ribonuclease HIII (Protochlamydia amoebophila (strain UWE25)).